Consider the following 541-residue polypeptide: Tegument protein UL21 homolog (541 aa).

Belongs to the alphaherpesvirinae UL21 protein family. Interacts (via C-terminus) with UL16.

Its subcellular location is the virion tegument. The protein resides in the host cytoplasm. It localises to the host nucleus. May participate in DNA packaging/capsid maturation events. Promotes efficient incorporation of tegument proteins UL46, UL49, and US3 homologs into virions. May also play a role in capsid transport to the trans-Golgi network (TGN). The polypeptide is Tegument protein UL21 homolog (Varicella-zoster virus (strain Oka vaccine) (HHV-3)).